Reading from the N-terminus, the 120-residue chain is NAD(P)H-quinone oxidoreductase subunit 3, chloroplastic (120 aa).

The next 3 membrane-spanning stretches (helical) occupy residues 9–29 (IFWTFLIIASLIPILAFWISG), 64–84 (MFALVFVVFDVETVFLYPWAM), and 88–108 (VLGVSVFIEAFIFVLILVVGL).

The protein belongs to the complex I subunit 3 family. In terms of assembly, NDH is composed of at least 16 different subunits, 5 of which are encoded in the nucleus.

It localises to the plastid. Its subcellular location is the chloroplast thylakoid membrane. It catalyses the reaction a plastoquinone + NADH + (n+1) H(+)(in) = a plastoquinol + NAD(+) + n H(+)(out). The catalysed reaction is a plastoquinone + NADPH + (n+1) H(+)(in) = a plastoquinol + NADP(+) + n H(+)(out). Its function is as follows. NDH shuttles electrons from NAD(P)H:plastoquinone, via FMN and iron-sulfur (Fe-S) centers, to quinones in the photosynthetic chain and possibly in a chloroplast respiratory chain. The immediate electron acceptor for the enzyme in this species is believed to be plastoquinone. Couples the redox reaction to proton translocation, and thus conserves the redox energy in a proton gradient. In Agrostis stolonifera (Creeping bentgrass), this protein is NAD(P)H-quinone oxidoreductase subunit 3, chloroplastic.